A 129-amino-acid polypeptide reads, in one-letter code: uncharacterized protein (129 aa).

The disordered stretch occupies residues 52–94 (NGDEESQDDWLNDLLKSDGDGGKAGPVDPSHPMETTTTDHSSQ). Residues 53-62 (GDEESQDDWL) are compositionally biased toward acidic residues. Positions 84–94 (METTTTDHSSQ) are enriched in polar residues.

This is an uncharacterized protein from Caenorhabditis elegans.